Reading from the N-terminus, the 276-residue chain is NADPH-dependent 7-cyano-7-deazaguanine reductase (276 aa).

Substrate is bound at residue I83–S85. Position 85–86 (S85–K86) interacts with NADPH. C184 acts as the Thioimide intermediate in catalysis. The Proton donor role is filled by D191. H223 to E224 lines the substrate pocket. R252 to G253 contributes to the NADPH binding site.

Belongs to the GTP cyclohydrolase I family. QueF type 2 subfamily. Homodimer.

The protein resides in the cytoplasm. The catalysed reaction is 7-aminomethyl-7-carbaguanine + 2 NADP(+) = 7-cyano-7-deazaguanine + 2 NADPH + 3 H(+). It participates in tRNA modification; tRNA-queuosine biosynthesis. In terms of biological role, catalyzes the NADPH-dependent reduction of 7-cyano-7-deazaguanine (preQ0) to 7-aminomethyl-7-deazaguanine (preQ1). This is NADPH-dependent 7-cyano-7-deazaguanine reductase from Pseudomonas putida (strain ATCC 700007 / DSM 6899 / JCM 31910 / BCRC 17059 / LMG 24140 / F1).